Here is a 391-residue protein sequence, read N- to C-terminus: UPF0229 protein BCG9842_B4751 (391 aa).

Over residues 1-16 (MGEENQPNYTISQENW) the composition is skewed to polar residues. Disordered regions lie at residues 1–31 (MGEENQPNYTISQENWSLHRKGYDDQQRHQE) and 80–117 (HVGQGNGDSKVGDVVARDGSGGQKQKGPGKGQGAGDAA). A compositionally biased stretch (basic and acidic residues) spans 21-31 (KGYDDQQRHQE). Residues 98–115 (GSGGQKQKGPGKGQGAGD) show a composition bias toward gly residues.

This sequence belongs to the UPF0229 family.

In Bacillus cereus (strain G9842), this protein is UPF0229 protein BCG9842_B4751.